A 413-amino-acid polypeptide reads, in one-letter code: Ras association domain-containing protein 5 (413 aa).

Residues Met-1–Pro-105 form a disordered region. Over residues Ala-61–His-74 the composition is skewed to basic and acidic residues. A Phorbol-ester/DAG-type zinc finger spans residues Gly-117–Cys-165. Residues Ser-177 and Ser-274 each carry the phosphoserine modification. The Ras-associating domain occupies Pro-265–Thr-359. Position 347 is a phosphothreonine (Thr-347). An SARAH domain is found at Asp-361 to Ser-408.

As to quaternary structure, interacts directly with activated HRAS; a RASSF5-STK4/MST1 complex probably associates with activated HRAS. Interacts with KRAS. Probably interacts with Ras-like GTPases RRAS, MRAS, RAP1B, RAP2A and RALA. Interacts with RRAS2. Can self-associate. Interacts with RSSF1 isoform A. The RSSF1 isoform A-RSSF5 heterodimer probably mediates the association of RSSF1 with HRAS. Isoform 2 interacts with activated RAP1A and ITGAL/LFA-1. Binds STK4/MST1, inhibiting STK4/MST1 autoactivation.

The protein localises to the cytoplasm. It localises to the cytoskeleton. Functionally, potential tumor suppressor. Seems to be involved in lymphocyte adhesion by linking RAP1A activation upon T-cell receptor or chemokine stimulation to integrin activation. Stimulates lymphocyte polarization and the patch-like distribution of ITGAL/LFA-1, resulting in an enhanced adhesion to ICAM1. Together with RAP1A may participate in regulation of microtubule growth. The association with activated RAP1A is required for directional movement of endothelial cells during wound healing. May be involved in regulation of Ras apoptotic function. The RASSF5-STK4/MST1 complex may mediate HRAS and KRAS induced apoptosis. This Rattus norvegicus (Rat) protein is Ras association domain-containing protein 5 (Rassf5).